The sequence spans 217 residues: Probable GTP-binding protein EngB (217 aa).

The region spanning alanine 37–glutamate 214 is the EngB-type G domain. Residues glycine 45 to serine 52, glycine 72 to glutamate 76, aspartate 92 to glycine 95, threonine 159 to aspartate 162, and threonine 193 to serine 195 each bind GTP. Mg(2+)-binding residues include serine 52 and threonine 74.

Belongs to the TRAFAC class TrmE-Era-EngA-EngB-Septin-like GTPase superfamily. EngB GTPase family. Mg(2+) serves as cofactor.

Necessary for normal cell division and for the maintenance of normal septation. This Rhodopseudomonas palustris (strain BisB5) protein is Probable GTP-binding protein EngB.